A 189-amino-acid chain; its full sequence is Elongation factor P (189 aa).

It belongs to the elongation factor P family.

It is found in the cytoplasm. It functions in the pathway protein biosynthesis; polypeptide chain elongation. Its function is as follows. Involved in peptide bond synthesis. Stimulates efficient translation and peptide-bond synthesis on native or reconstituted 70S ribosomes in vitro. Probably functions indirectly by altering the affinity of the ribosome for aminoacyl-tRNA, thus increasing their reactivity as acceptors for peptidyl transferase. The protein is Elongation factor P of Rhizobium johnstonii (strain DSM 114642 / LMG 32736 / 3841) (Rhizobium leguminosarum bv. viciae).